Reading from the N-terminus, the 343-residue chain is Small ribosomal subunit biogenesis GTPase RsgA (343 aa).

The CP-type G domain maps to 116 to 275; the sequence is RGQLKPVAAN…LIDSPGIREF (160 aa). GTP is bound by residues 163–166 and 217–225; these read NKFD and GQSGVGKSS. Zn(2+)-binding residues include cysteine 299, cysteine 304, histidine 306, and cysteine 312.

This sequence belongs to the TRAFAC class YlqF/YawG GTPase family. RsgA subfamily. In terms of assembly, monomer. Associates with 30S ribosomal subunit, binds 16S rRNA. Requires Zn(2+) as cofactor.

The protein resides in the cytoplasm. Its function is as follows. One of several proteins that assist in the late maturation steps of the functional core of the 30S ribosomal subunit. Helps release RbfA from mature subunits. May play a role in the assembly of ribosomal proteins into the subunit. Circularly permuted GTPase that catalyzes slow GTP hydrolysis, GTPase activity is stimulated by the 30S ribosomal subunit. The protein is Small ribosomal subunit biogenesis GTPase RsgA of Pseudomonas fluorescens (strain Pf0-1).